The primary structure comprises 94 residues: Integration host factor subunit beta (94 aa).

Belongs to the bacterial histone-like protein family. As to quaternary structure, heterodimer of an alpha and a beta chain.

Its function is as follows. This protein is one of the two subunits of integration host factor, a specific DNA-binding protein that functions in genetic recombination as well as in transcriptional and translational control. This chain is Integration host factor subunit beta, found in Escherichia fergusonii (strain ATCC 35469 / DSM 13698 / CCUG 18766 / IAM 14443 / JCM 21226 / LMG 7866 / NBRC 102419 / NCTC 12128 / CDC 0568-73).